A 435-amino-acid polypeptide reads, in one-letter code: Trigger factor (435 aa).

In terms of domain architecture, PPIase FKBP-type spans 163-248 (GDFVTFDFKG…VKEIKVKELP (86 aa)).

Belongs to the FKBP-type PPIase family. Tig subfamily.

It is found in the cytoplasm. The enzyme catalyses [protein]-peptidylproline (omega=180) = [protein]-peptidylproline (omega=0). Involved in protein export. Acts as a chaperone by maintaining the newly synthesized protein in an open conformation. Functions as a peptidyl-prolyl cis-trans isomerase. This Geobacter sp. (strain M21) protein is Trigger factor.